The following is a 184-amino-acid chain: Inorganic pyrophosphatase (184 aa).

Positions 19, 33, and 45 each coordinate substrate. Residues aspartate 55, aspartate 60, and aspartate 92 each contribute to the Mg(2+) site. Substrate is bound at residue tyrosine 129.

This sequence belongs to the PPase family. Homohexamer. The cofactor is Mg(2+).

The protein localises to the cytoplasm. The enzyme catalyses diphosphate + H2O = 2 phosphate + H(+). In terms of biological role, catalyzes the hydrolysis of inorganic pyrophosphate (PPi) forming two phosphate ions. The protein is Inorganic pyrophosphatase of Mycoplasma genitalium (strain ATCC 33530 / DSM 19775 / NCTC 10195 / G37) (Mycoplasmoides genitalium).